A 437-amino-acid polypeptide reads, in one-letter code: ATP-dependent protease ATPase subunit HslU (437 aa).

ATP is bound by residues Val-18, 60 to 65 (GCGKTE), Asp-250, Glu-315, and Arg-387.

This sequence belongs to the ClpX chaperone family. HslU subfamily. A double ring-shaped homohexamer of HslV is capped on each side by a ring-shaped HslU homohexamer. The assembly of the HslU/HslV complex is dependent on binding of ATP.

It is found in the cytoplasm. Functionally, ATPase subunit of a proteasome-like degradation complex; this subunit has chaperone activity. The binding of ATP and its subsequent hydrolysis by HslU are essential for unfolding of protein substrates subsequently hydrolyzed by HslV. HslU recognizes the N-terminal part of its protein substrates and unfolds these before they are guided to HslV for hydrolysis. In Methylobacterium nodulans (strain LMG 21967 / CNCM I-2342 / ORS 2060), this protein is ATP-dependent protease ATPase subunit HslU.